Here is a 107-residue protein sequence, read N- to C-terminus: Transmembrane protein 213 (107 aa).

An N-terminal signal peptide occupies residues 1–27; it reads MQRLPAATRATLILSLAFASLHSACSA. The Extracellular portion of the chain corresponds to 28–70; that stretch reads EASSSNSSSLTAHHPDPGTLEQCLNVDFCPQAARCCRTGVDEY. Residues 71–91 traverse the membrane as a helical segment; the sequence is GWIAAAVGWSLWFLTLILLCV. Topologically, residues 92–107 are cytoplasmic; sequence DKLMKLTPDEPKDLQA.

It is found in the membrane. The sequence is that of Transmembrane protein 213 (TMEM213) from Homo sapiens (Human).